We begin with the raw amino-acid sequence, 65 residues long: Large ribosomal subunit protein uL29 (65 aa).

The protein belongs to the universal ribosomal protein uL29 family.

This chain is Large ribosomal subunit protein uL29 (rpmC), found in Borreliella burgdorferi (strain ATCC 35210 / DSM 4680 / CIP 102532 / B31) (Borrelia burgdorferi).